Consider the following 379-residue polypeptide: Alkanesulfonate monooxygenase (379 aa).

Belongs to the SsuD family.

It catalyses the reaction an alkanesulfonate + FMNH2 + O2 = an aldehyde + FMN + sulfite + H2O + 2 H(+). Its function is as follows. Catalyzes the desulfonation of aliphatic sulfonates. This is Alkanesulfonate monooxygenase from Pseudomonas savastanoi pv. phaseolicola (strain 1448A / Race 6) (Pseudomonas syringae pv. phaseolicola (strain 1448A / Race 6)).